We begin with the raw amino-acid sequence, 216 residues long: Adenylate kinase (216 aa).

10–15 (GAGKGT) is an ATP binding site. The NMP stretch occupies residues 30–59 (STGDMLRAAVGVGTEVGKRAKAVMDAGKLV). Residues Thr-31, Arg-36, 57–59 (KLV), 85–88 (GFPR), and Gln-92 each bind AMP. Residues 126-163 (GRYTCAQCGTVYHDTDKVPVEEGVCDKCGSTHFKRRPD) form an LID region. Arg-127 is an ATP binding site. Positions 130 and 133 each coordinate Zn(2+). Residue 136-137 (VY) coordinates ATP. Residues Cys-150 and Cys-153 each contribute to the Zn(2+) site. 2 residues coordinate AMP: Arg-160 and Arg-172. Ala-200 is an ATP binding site.

Belongs to the adenylate kinase family. Monomer.

It is found in the cytoplasm. The catalysed reaction is AMP + ATP = 2 ADP. The protein operates within purine metabolism; AMP biosynthesis via salvage pathway; AMP from ADP: step 1/1. Its function is as follows. Catalyzes the reversible transfer of the terminal phosphate group between ATP and AMP. Plays an important role in cellular energy homeostasis and in adenine nucleotide metabolism. This Rhizobium etli (strain CIAT 652) protein is Adenylate kinase.